The chain runs to 84 residues: MKIAIVMTLLLVAFSTASFAIEPIERAALDLVMARADSGGDAGGDAGADDEGSCKWMFQSCEPPAKCCDGWTCYKGRCNLILGR.

Residues 1–20 (MKIAIVMTLLLVAFSTASFA) form the signal peptide. A propeptide spanning residues 21-35 (IEPIERAALDLVMAR) is cleaved from the precursor. 3 disulfides stabilise this stretch: cysteine 54–cysteine 68, cysteine 61–cysteine 73, and cysteine 67–cysteine 78. Leucine 82 bears the Leucine amide mark.

In terms of tissue distribution, expressed by the venom gland.

The protein resides in the secreted. Weakly nhibits voltage-gated sodium channels Nav1.7/SCN9A. High concentration of the toxin (3 uM) inhibits Nav1.7/SCN9A currents by 79%. The chain is Mu-Sparatoxin-Hp1 from Heteropoda pingtungensis (Pingtung huntsman spider).